The sequence spans 195 residues: Interferon tau (195 aa).

A signal peptide spans 1–23 (MAFVLSLLMALVLASYSPGGSLG). Cystine bridges form between cysteine 24–cysteine 122 and cysteine 52–cysteine 162.

Belongs to the alpha/beta interferon family. IFN-alphaII subfamily. Constitutively and exclusively expressed in the mononuclear cells of the extraembryonic trophectoderm.

The protein resides in the secreted. In terms of biological role, paracrine hormone primarily responsible for maternal recognition of pregnancy. Interacts with endometrial receptors, probably type I interferon receptors, and blocks estrogen receptor expression, preventing the estrogen-induced increase in oxytocin receptor expression in the endometrium. This results in the suppression of the pulsatile endometrial release of the luteolytic hormone prostaglandin F2-alpha, hindering the regression of the corpus luteum (luteolysis) and therefore a return to ovarian cyclicity. This, and a possible direct effect of IFN-tau on prostaglandin synthesis, leads in turn to continued ovarian progesterone secretion, which stimulates the secretion by the endometrium of the nutrients required for the growth of the conceptus. In summary, displays particularly high antiviral and antiproliferative potency concurrently with particular weak cytotoxicity, high antiluteolytic activity and immunomodulatory properties. In contrast with other IFNs, IFN-tau is not virally inducible. In Cervus elaphus (Red deer), this protein is Interferon tau (IFNT).